The following is a 309-amino-acid chain: Homoserine kinase (309 aa).

91–101 lines the ATP pocket; the sequence is PIGSGLGSSAC.

It belongs to the GHMP kinase family. Homoserine kinase subfamily.

The protein localises to the cytoplasm. The enzyme catalyses L-homoserine + ATP = O-phospho-L-homoserine + ADP + H(+). It functions in the pathway amino-acid biosynthesis; L-threonine biosynthesis; L-threonine from L-aspartate: step 4/5. In terms of biological role, catalyzes the ATP-dependent phosphorylation of L-homoserine to L-homoserine phosphate. This Salmonella agona (strain SL483) protein is Homoserine kinase.